Here is a 473-residue protein sequence, read N- to C-terminus: Homeobox protein ATH1 (473 aa).

Residues 205–221 (SKYLHSVQEILSHFAAY) are SR/KY domain. Positions 266–336 (QRRALEAKKT…NLRERICKKI (71 aa)) are BELL domain. The segment at residues 372-434 (IWRPQRGLPE…NARVRLWKPM (63 aa)) is a DNA-binding region (homeobox). A disordered region spans residues 448-473 (NNSHIQPNGPTLRMPKSVMMSQAMHK).

This sequence belongs to the TALE/BELL homeobox family. As to quaternary structure, may form heterodimeric complex with the TALE/KNOX protein STM. Most abundant in flowers.

Its subcellular location is the nucleus. Functionally, transcription factor which may be involved in the signal transduction pathway downstream of the COP1 gene. Controls floral competency as a specific activator of FLC expression. Is responsive of the nuclear import of SHOOT MERISTEMLESS (STM). The chain is Homeobox protein ATH1 (ATH1) from Arabidopsis thaliana (Mouse-ear cress).